Reading from the N-terminus, the 673-residue chain is Probable serine/threonine-protein kinase SCO3848 (673 aa).

The Protein kinase domain occupies 11–277; the sequence is YELGPVLGRG…EMRVDIEACL (267 aa). ATP contacts are provided by residues 17 to 25 and Lys40; that span reads LGRGGMAEV. Asp138 serves as the catalytic Proton acceptor. The tract at residues 302-345 is disordered; it reads DQPTTALRSDGGGGATTMLPPMNPDDGGYGYDERPDRRRQQPRK. 4 PASTA domains span residues 379-445, 446-511, 512-580, and 581-649; these read GNDK…VVST, GAPK…EVAK, AEEK…VVGK, and AVEK…MTVP. The interval 472-500 is disordered; it reads FEVETKQTESSQDEGTILSQNPDPGKELE. Residues 479–493 are compositionally biased toward polar residues; sequence TESSQDEGTILSQNP. Disordered regions lie at residues 613–641 and 653–673; these read AQGSPGDDNAKVFASNPQPGSEVDDPAAT and GNGNGGNGNGGAIAGLPGFGD.

The protein belongs to the protein kinase superfamily. Ser/Thr protein kinase family.

The catalysed reaction is L-seryl-[protein] + ATP = O-phospho-L-seryl-[protein] + ADP + H(+). It carries out the reaction L-threonyl-[protein] + ATP = O-phospho-L-threonyl-[protein] + ADP + H(+). This is Probable serine/threonine-protein kinase SCO3848 from Streptomyces coelicolor (strain ATCC BAA-471 / A3(2) / M145).